Here is a 507-residue protein sequence, read N- to C-terminus: Pre-glycoprotein polyprotein GP complex (507 aa).

A lipid anchor (N-myristoyl glycine; by host) is attached at G2. Topologically, residues 2-17 (GQVVTFLQSLPEVINE) are extracellular. The helical transmembrane segment at 18–33 (AINIALIAISIICILK) threads the bilayer. Over 34–58 (GLVNFWKCGVVQLAIFLCLAGRKCD) the chain is Cytoplasmic. C57 serves as a coordination point for Zn(2+). Topologically, residues 59–445 (GLMIDRRHEL…QGKTPIALTD (387 aa)) are extracellular. 4 disulfide bridges follow: C86-C247, C292-C305, C314-C323, and C377-C398. N-linked (GlcNAc...) asparagine; by host glycosylation is found at N89, N111, N179, and N240. Residues N378, N386, N403, and N408 are each glycosylated (N-linked (GlcNAc...) asparagine; by host). The chain crosses the membrane as a helical span at residues 446–466 (ICFWSLVFFTSTVFLQLVGIP). Over 467–507 (THRHLVGEGCPKPHRITSNSLCACGYYKIPKRPTRWVRKGK) the chain is Cytoplasmic. Positions 468, 470, 476, 480, 488, and 490 each coordinate Zn(2+).

Belongs to the arenaviridae GPC protein family. Interacts with glycoprotein G2. Part of the GP complex (GP-C) together with glycoprotein G1 and glycoprotein G2. The GP-complex interacts with protein Z, which interacts with ribonucleocapsid; these interactions may induce virion budding. In terms of assembly, homotrimer; disulfide-linked. In pre-fusion state, G1 homotrimers bind G2 homotrimers via ionic interactions. Part of the GP complex (GP-C) together with glycoprotein G2 and the stable signal peptide. The GP-complex interacts with protein Z, which interacts with ribonucleocapsid; these interactions may induce virion budding. As to quaternary structure, homotrimer. Interacts with the stable signal peptide. In pre-fusion state, G2 homotrimers bind G1 homotrimers via ionic interactions. Part of the GP complex (GP-C) together with glycoprotein G1 and the stable signal peptide. Acidification in the endosome triggers rearrangements, which ultimately leads to a 6 helix bundle formed by the two heptad repeat domains (HR1 and HR2) in post-fusion state. The GP-complex interacts with protein Z, which interacts with ribonucleocapsid; these interactions may induce virion budding. Post-translationally, specific enzymatic cleavages in vivo yield mature proteins. GP-C polyprotein is cleaved in the endoplasmic reticulum by the host protease MBTPS1. Only cleaved glycoprotein is incorporated into virions. The SSP remains stably associated with the GP complex following cleavage by signal peptidase and plays crucial roles in the trafficking of GP through the secretory pathway. In terms of processing, myristoylation is necessary for GP2-mediated fusion activity.

The protein resides in the virion membrane. It localises to the host endoplasmic reticulum membrane. The protein localises to the host Golgi apparatus membrane. It is found in the host cell membrane. Functions as a cleaved signal peptide that is retained as the third component of the GP complex (GP-C). Helps to stabilize the spike complex in its native conformation. The SSP is required for efficient glycoprotein expression, post-translational maturation cleavage of G1 and G2, glycoprotein transport to the cell surface plasma membrane, formation of infectious virus particles, and acid pH-dependent glycoprotein-mediated cell fusion. Functionally, forms the virion spikes together with glycoprotein G2. The glycoprotein spike trimers are connected to the underlying matrix. Interacts with the host receptor leading to virus endocytosis. In terms of biological role, forms the virion spikes together with glycoprotein G1. The glycoprotein spike trimers are connected to the underlying matrix. Class I viral fusion protein that directs fusion of viral and host endosomal membranes, leading to delivery of the nucleocapsid into the cytoplasm. Membrane fusion is mediated by irreversible conformational changes induced by acidification. This chain is Pre-glycoprotein polyprotein GP complex, found in Allpahuayo mammarenavirus (isolate Rat/Peru/CLHP-2472/1997) (ALLV).